A 175-amino-acid chain; its full sequence is Isopentenyl-diphosphate Delta-isomerase (175 aa).

Residues His23 and His30 each coordinate Mn(2+). The Nudix hydrolase domain maps to 28-162 (TLHLAFCVFV…PLRYTPWFRR (135 aa)). Cys65 is an active-site residue. Position 67 (His67) interacts with Mn(2+). Residue Glu85 coordinates Mg(2+). Residues Glu111 and Glu113 each coordinate Mn(2+). Glu113 is an active-site residue.

This sequence belongs to the IPP isomerase type 1 family. Mg(2+) is required as a cofactor. The cofactor is Mn(2+).

It is found in the cytoplasm. It catalyses the reaction isopentenyl diphosphate = dimethylallyl diphosphate. It participates in isoprenoid biosynthesis; dimethylallyl diphosphate biosynthesis; dimethylallyl diphosphate from isopentenyl diphosphate: step 1/1. In terms of biological role, catalyzes the 1,3-allylic rearrangement of the homoallylic substrate isopentenyl (IPP) to its highly electrophilic allylic isomer, dimethylallyl diphosphate (DMAPP). In Halorhodospira halophila (strain DSM 244 / SL1) (Ectothiorhodospira halophila (strain DSM 244 / SL1)), this protein is Isopentenyl-diphosphate Delta-isomerase.